The following is a 428-amino-acid chain: Cyclic AMP-responsive element-binding protein 3-like protein 4 (428 aa).

The tract at residues 1–68 (MLLGSLFEQT…EFLQMMINPN (68 aa)) is required for transcriptional activation. At 1–294 (MLLGSLFEQT…QTSNKAAQTS (294 aa)) the chain is on the cytoplasmic side. Positions 71-111 (YSTGPAAAESPESDSGFSDDPRPDTPPQSETSPPLPQPTPV) are disordered. Residues 216 to 279 (ILKKVRRKIR…ISLITQLRKL (64 aa)) form the bZIP domain. The interval 218-247 (KKVRRKIRNKQSAQDSRRRKKEYIDGLESR) is basic motif. Residues 258–279 (LHKKVVELEKHNISLITQLRKL) are leucine-zipper. A helical; Signal-anchor for type II membrane protein membrane pass occupies residues 295–315 (TCVLILLFSLALLVFPSYSPF). The Lumenal portion of the chain corresponds to 316–428 (RSRPSASQED…LSKTARADEM (113 aa)). Residues 339 to 428 (NKGGFSEVAD…LSKTARADEM (90 aa)) form a disordered region. The span at 354–368 (TLHRAQQREEGDPGR) shows a compositional bias: basic and acidic residues. The N-linked (GlcNAc...) asparagine glycan is linked to asparagine 418.

The protein belongs to the bZIP family. ATF subfamily. In terms of assembly, binds DNA as a dimer. In terms of processing, controlled by regulated intramembrane proteolysis (RIP). A fragment containing the cytoplasmic transcription factor domain is released by proteolysis. The cleavage seems to be performed sequentially by site-1 and site-2 proteases (PS1 and PS2).

It localises to the endoplasmic reticulum membrane. Its subcellular location is the nucleus. In terms of biological role, transcriptional activator. This chain is Cyclic AMP-responsive element-binding protein 3-like protein 4 (creb3l4), found in Xenopus tropicalis (Western clawed frog).